Consider the following 222-residue polypeptide: Ribosomal RNA small subunit methyltransferase G (222 aa).

S-adenosyl-L-methionine is bound by residues glycine 85, leucine 90, 108–110, 136–137, and arginine 150; these read DAT and VE.

The protein belongs to the methyltransferase superfamily. RNA methyltransferase RsmG family.

It is found in the cytoplasm. Functionally, specifically methylates the N7 position of a guanine in 16S rRNA. This chain is Ribosomal RNA small subunit methyltransferase G, found in Chlorobium phaeobacteroides (strain DSM 266 / SMG 266 / 2430).